The sequence spans 459 residues: MLVTRFAPSPTGYLHIGGLRTALYNYLYARANGGKFLLRIEDTDLKRNSEEATQAIKEAFAWCKLDHDGEVTYQSRRFEIYKEYVAKLLAEGKAYKCYMSKEELDELRKEQEARKERPKYDNRYRDFTGTPPAGIEPVIRIKAPLSGEILIRDGIKGEVKFKVEDILDDFIIARSDGTPTYNFTVVVDDALMGVTHVIRGDDHLSNTPKQIVLYDALGFKRPEFFHVAMINGEDGKKLSKRHGATDVMEYKRMGYLPEALLNFLVRLGWSHGDDEIFSIEDMLKYFDPHDINKSSSTYNAQKLDWLNAHYIKTLPYERLADEMKEFGVDFRALPKGELLLNSLRERSKTLVEMSQSAKAIIDAPAAYDEKAYAKFITPSSLEILAKFAEILTLNLDAAGYEKITNEFLEQNGLKLKDLAQALRVALTGSSVSPSIFEVLEVLGSKEIKQRIQNILKERK.

A 'HIGH' region motif is present at residues 8–18 (PSPTGYLHIGG). The 'KMSKS' region signature appears at 237–241 (KLSKR). Lys-240 provides a ligand contact to ATP.

This sequence belongs to the class-I aminoacyl-tRNA synthetase family. Glutamate--tRNA ligase type 1 subfamily. Monomer.

The protein localises to the cytoplasm. It carries out the reaction tRNA(Glu) + L-glutamate + ATP = L-glutamyl-tRNA(Glu) + AMP + diphosphate. Its function is as follows. Catalyzes the attachment of glutamate to tRNA(Glu) in a two-step reaction: glutamate is first activated by ATP to form Glu-AMP and then transferred to the acceptor end of tRNA(Glu). This chain is Glutamate--tRNA ligase 2, found in Campylobacter curvus (strain 525.92).